The primary structure comprises 330 residues: Methionyl-tRNA formyltransferase (330 aa).

(6S)-5,6,7,8-tetrahydrofolate is bound at residue serine 116–proline 119.

It belongs to the Fmt family.

It catalyses the reaction L-methionyl-tRNA(fMet) + (6R)-10-formyltetrahydrofolate = N-formyl-L-methionyl-tRNA(fMet) + (6S)-5,6,7,8-tetrahydrofolate + H(+). Its function is as follows. Attaches a formyl group to the free amino group of methionyl-tRNA(fMet). The formyl group appears to play a dual role in the initiator identity of N-formylmethionyl-tRNA by promoting its recognition by IF2 and preventing the misappropriation of this tRNA by the elongation apparatus. This chain is Methionyl-tRNA formyltransferase, found in Nitratidesulfovibrio vulgaris (strain DP4) (Desulfovibrio vulgaris).